The primary structure comprises 611 residues: UPF0508 protein SCY_3114 (611 aa).

Belongs to the UPF0508 family.

The sequence is that of UPF0508 protein SCY_3114 from Saccharomyces cerevisiae (strain YJM789) (Baker's yeast).